A 240-amino-acid polypeptide reads, in one-letter code: Transcriptional activator protein VanR (240 aa).

The region spanning 169–234 is the HTH luxR-type domain; it reads DAKPRAVLTA…QAITKAILGG (66 aa). Positions 193–212 form a DNA-binding region, H-T-H motif; the sequence is AWEIATIINTSERTVKFHFS.

The protein belongs to the autoinducer-regulated transcriptional regulatory protein family.

Functionally, probable transcriptional activator. Binds to autoinducer molecule ODHL. In Vibrio anguillarum (Listonella anguillarum), this protein is Transcriptional activator protein VanR (vanR).